The following is a 418-amino-acid chain: Tryptophan synthase beta chain (418 aa).

Positions 1-18 are enriched in polar residues; the sequence is MTSTLPKASQPDPSSLQP. Positions 1–28 are disordered; it reads MTSTLPKASQPDPSSLQPSARPGAHGRF. An N6-(pyridoxal phosphate)lysine modification is found at Lys-111.

Belongs to the TrpB family. In terms of assembly, tetramer of two alpha and two beta chains. It depends on pyridoxal 5'-phosphate as a cofactor.

The catalysed reaction is (1S,2R)-1-C-(indol-3-yl)glycerol 3-phosphate + L-serine = D-glyceraldehyde 3-phosphate + L-tryptophan + H2O. The protein operates within amino-acid biosynthesis; L-tryptophan biosynthesis; L-tryptophan from chorismate: step 5/5. The beta subunit is responsible for the synthesis of L-tryptophan from indole and L-serine. This is Tryptophan synthase beta chain from Synechococcus sp. (strain CC9902).